We begin with the raw amino-acid sequence, 891 residues long: Dynein axonemal intermediate chain 3 (891 aa).

A compositionally biased stretch (basic residues) spans 1–16 (MAPKQKKKSSRRKKSP). A disordered region spans residues 1 to 27 (MAPKQKKKSSRRKKSPKPILAASEDME). 4 WD repeats span residues 395-435 (ESPD…DRIE), 477-533 (GHKR…PLTP), 670-709 (IHDG…GPLL), and 713-753 (CAPK…HEPA). Residues 817–861 (HLEYVEQRKKIREQEKKEMEQEMAKKKVKIYQKSKEQMEAELKMD) are a coiled coil.

Interacts with ACTR2; this interaction reduces binding of the Arp2/3 complex to the VCA domain of nucleation promoting factors. Part of the multisubunit axonemal dynein complex formed at least of two heavy chains and a number of intermediate and light chains. Found in a associated with the catalytic heavy chain DNAH2, the intermediate chain DNAI4, and the light chain DYNLT1.

The protein localises to the cytoplasm. Functionally, acts as a negative regulator of cell migration, invasion, and metastasis downstream of p53/TP53, through inhibition of Arp2/3 complex-mediated actin polymerization. Via its association with the multisubunit axonemal dynein complex, is potentially involved in the regulation of cilia function. May play a role in osteogenesis of dental tissue-derived mesenchymal stem cells. The polypeptide is Dynein axonemal intermediate chain 3 (DNAI3) (Macaca fascicularis (Crab-eating macaque)).